Here is a 349-residue protein sequence, read N- to C-terminus: Sperm acrosomal protein FSA-ACR.1 (349 aa).

The signal sequence occupies residues 1–8 (MKEVYLVG). A disordered region spans residues 1-265 (MKEVYLVGYA…EQPSGIPPSS (265 aa)). The span at 63–114 (TSGEHTSVEHASAEHSSTEHTSGEHASGEHTSGERATGEHTSSEHATSEHTS) shows a compositional bias: basic and acidic residues. 2 stretches are compositionally biased toward polar residues: residues 117–142 (QPSGEQPSGEKSSGEQPSGEKSSGEQ) and 154–171 (SGEQSSGEKSSAEQTSGE). The span at 178-189 (PSGEHAVAEKPS) shows a compositional bias: basic and acidic residues. Low complexity predominate over residues 221–248 (EQASIEKASSEQASAEQASAEQASSEQA). Asn-342 carries N-linked (GlcNAc...) asparagine glycosylation.

The protein to acrosomal proteins SP-10. As to expression, testis.

The protein resides in the cytoplasmic vesicle. Its subcellular location is the secretory vesicle. It localises to the acrosome. The sequence is that of Sperm acrosomal protein FSA-ACR.1 from Vulpes vulpes (Red fox).